Here is a 166-residue protein sequence, read N- to C-terminus: Phosphopantetheine adenylyltransferase (166 aa).

Substrate is bound at residue S8. Residues 8 to 9 (SF) and H16 each bind ATP. K40, T72, and R86 together coordinate substrate. ATP is bound by residues 87–89 (GLR), E97, and 122–128 (YSFLSSS).

It belongs to the bacterial CoaD family. Homohexamer. Mg(2+) serves as cofactor.

The protein localises to the cytoplasm. The enzyme catalyses (R)-4'-phosphopantetheine + ATP + H(+) = 3'-dephospho-CoA + diphosphate. It participates in cofactor biosynthesis; coenzyme A biosynthesis; CoA from (R)-pantothenate: step 4/5. Functionally, reversibly transfers an adenylyl group from ATP to 4'-phosphopantetheine, yielding dephospho-CoA (dPCoA) and pyrophosphate. The chain is Phosphopantetheine adenylyltransferase from Synechococcus elongatus (strain ATCC 33912 / PCC 7942 / FACHB-805) (Anacystis nidulans R2).